A 696-amino-acid polypeptide reads, in one-letter code: Polyribonucleotide nucleotidyltransferase (696 aa).

Mg(2+)-binding residues include Asp-489 and Asp-495. In terms of domain architecture, KH spans 556 to 615; the sequence is PQYVTMKINPEKIRDVIGKGGVVIREITEATNCAIDISDDGTIKIAAHTTEEGEAAKRRI. In terms of domain architecture, S1 motif spans 625–693; the sequence is GKVYEGTVVK…RQGRVRLSMK (69 aa).

It belongs to the polyribonucleotide nucleotidyltransferase family. In terms of assembly, component of the RNA degradosome, which is a multiprotein complex involved in RNA processing and mRNA degradation. The cofactor is Mg(2+).

Its subcellular location is the cytoplasm. The catalysed reaction is RNA(n+1) + phosphate = RNA(n) + a ribonucleoside 5'-diphosphate. Involved in mRNA degradation. Catalyzes the phosphorolysis of single-stranded polyribonucleotides processively in the 3'- to 5'-direction. The chain is Polyribonucleotide nucleotidyltransferase from Coxiella burnetii (strain RSA 331 / Henzerling II).